A 510-amino-acid chain; its full sequence is 2,3-bisphosphoglycerate-independent phosphoglycerate mutase (510 aa).

Residues D11 and S61 each coordinate Mn(2+). Residue S61 is the Phosphoserine intermediate of the active site. Residues H124, 154-155, R185, R191, 260-263, and K333 contribute to the substrate site; these read RD and RPDR. Mn(2+) contacts are provided by D398, H402, D439, H440, and H457.

The protein belongs to the BPG-independent phosphoglycerate mutase family. Monomer. It depends on Mn(2+) as a cofactor.

The enzyme catalyses (2R)-2-phosphoglycerate = (2R)-3-phosphoglycerate. The protein operates within carbohydrate degradation; glycolysis; pyruvate from D-glyceraldehyde 3-phosphate: step 3/5. In terms of biological role, catalyzes the interconversion of 2-phosphoglycerate and 3-phosphoglycerate. The chain is 2,3-bisphosphoglycerate-independent phosphoglycerate mutase from Mycoplasma mobile (strain ATCC 43663 / 163K / NCTC 11711) (Mesomycoplasma mobile).